The sequence spans 370 residues: UDP-galactose transporter homolog 1 (370 aa).

Helical transmembrane passes span 22-42, 62-82, 115-135, 145-165, 175-195, 204-224, 242-262, 280-300, 307-327, and 333-353; these read ALTL…WSIL, IIIN…YNYV, CNVL…SPIG, LAYL…HFIF, YLVA…HVTT, TLLG…TNST, LMSL…IIFH, LIDI…IFII, IILI…SVIL, and SWEQ…EAFI.

The protein belongs to the nucleotide-sugar transporter family. SLC35B subfamily.

It is found in the endoplasmic reticulum membrane. Its function is as follows. May be involved in specific transport of UDP-Gal from the cytosol to the Golgi lumen. Involved in the maintenance of optimal conditions for the folding of secretory pathway proteins in the endoplasmic reticulum. This chain is UDP-galactose transporter homolog 1 (HUT1), found in Candida albicans (strain SC5314 / ATCC MYA-2876) (Yeast).